The primary structure comprises 360 residues: Phenylalanine--tRNA ligase alpha subunit (360 aa).

Glutamate 260 lines the Mg(2+) pocket.

Belongs to the class-II aminoacyl-tRNA synthetase family. Phe-tRNA synthetase alpha subunit type 1 subfamily. As to quaternary structure, tetramer of two alpha and two beta subunits. The cofactor is Mg(2+).

The protein localises to the cytoplasm. It catalyses the reaction tRNA(Phe) + L-phenylalanine + ATP = L-phenylalanyl-tRNA(Phe) + AMP + diphosphate + H(+). This is Phenylalanine--tRNA ligase alpha subunit from Sinorhizobium medicae (strain WSM419) (Ensifer medicae).